A 450-amino-acid chain; its full sequence is MEETVDDPPTSAVLLDHCHFSQVIFNSVEKFYIPGGDITCYYTLTQHFIPRRKDWIGIFRVGWKTTREYYTFMWVTLPVDLNSESAKQQEVQFKAYYLPKDDEYYQFCYVDQDGVVRGASIPFQFRPENEEDILVVTTQSEVEEIEQHNKELCKENRELKDSCVSLQKQNSDMQATLQKKQEELETLKSINKKLEQTMKEQKDCWEIELLQLKEQNQKMSSENEKMGVRVDQLQAQLSNQGREMEKLVQGVQDKTEQLEHLKEENGQLFLSLTEQREHQKKLEQTVEEMKQKETTAAKKQQELTDQNMDLSKRLSENMIIHDVLQREKEKMEKENDYLKRENNRLLSYMGLDCDSLSYQVPTSNQGGTRQDPGLVFGNPYSGIQESSAPSLLSIKKCPTCKSDFAADVFDHNLALEQHLQTLSLNCPICDKTFPAKEKQIFEDHVFCHTL.

The short motif at 133 to 136 (ILVV) is the CLIR element. Residues 135 to 349 (VVTTQSEVEE…RENNRLLSYM (215 aa)) adopt a coiled-coil conformation. Positions 203–206 (DCWE) match the LIR-like motif. Residues 371–381 (DPGLVFGNPYS) are interaction with LGALS8. Positions 395 to 450 (KKCPTCKSDFAADVFDHNLALEQHLQTLSLNCPICDKTFPAKEKQIFEDHVFCHTL) are interaction with MYO6. The UBZ1-type zinc-finger motif lies at 423 to 448 (SLNCPICDKTFPAKEKQIFEDHVFCH). Residues C426, C429, H444, and H448 each coordinate Zn(2+).

The protein belongs to the CALCOCO family. Dimer. Part of a complex consisting of CALCOCO2, TAX1BP1 and MYO6. Interacts with GEMIN4. Interacts with ATG8 family members MAP1LC3A, MAP1LC3B, GABARAP, GABARAPL1 and GABARAPL2. Interacts with ATG8 family member MAP1LC3C. Interacts with LGALS8. Interacts with TOM1; the interaction is indirect and is mediated by MYO6, which acts as a bridge between TOM1 and CALCOCO2. Interacts with AZI2.

The protein localises to the cytoplasm. It is found in the perinuclear region. The protein resides in the cytoskeleton. It localises to the cytoplasmic vesicle. Its subcellular location is the autophagosome membrane. In terms of biological role, xenophagy-specific receptor required for autophagy-mediated intracellular bacteria degradation. Acts as an effector protein of galectin-sensed membrane damage that restricts the proliferation of infecting pathogens upon entry into the cytosol by targeting LGALS8-associated bacteria for autophagy. Initially orchestrates bacteria targeting to autophagosomes and subsequently ensures pathogen degradation by regulating pathogen-containing autophagosome maturation. Bacteria targeting to autophagosomes relies on its interaction with MAP1LC3A, MAP1LC3B and/or GABARAPL2, whereas regulation of pathogen-containing autophagosome maturation requires the interaction with MAP3LC3C. May play a role in ruffle formation and actin cytoskeleton organization and seems to negatively regulate constitutive secretion. The chain is Calcium-binding and coiled-coil domain-containing protein 2 from Bos taurus (Bovine).